Reading from the N-terminus, the 555-residue chain is Membrane protein insertase YidC (555 aa).

A helical membrane pass occupies residues 7 to 24 (ILWVIFSMSLVLLYDNWQ). Residues 62–81 (APGAAGTAAPAAPQAAAQPT) are disordered. Transmembrane regions (helical) follow at residues 334-354 (LELVKDYGWLTILAKPLFWLL), 360-380 (FLGNWGWSIIALTVLIKLVFF), 430-450 (LGGCLPIVIQIPVFIALYWVL), 468-488 (LSVPDPFYILPIVMAVSMFVQ), and 503-523 (VMMIMPLVFSVMFFFFPAGLV).

The protein belongs to the OXA1/ALB3/YidC family. Type 1 subfamily. Interacts with the Sec translocase complex via SecD. Specifically interacts with transmembrane segments of nascent integral membrane proteins during membrane integration.

It localises to the cell inner membrane. Its function is as follows. Required for the insertion and/or proper folding and/or complex formation of integral membrane proteins into the membrane. Involved in integration of membrane proteins that insert both dependently and independently of the Sec translocase complex, as well as at least some lipoproteins. Aids folding of multispanning membrane proteins. The chain is Membrane protein insertase YidC from Cupriavidus necator (strain ATCC 17699 / DSM 428 / KCTC 22496 / NCIMB 10442 / H16 / Stanier 337) (Ralstonia eutropha).